A 266-amino-acid chain; its full sequence is Undecaprenyl-diphosphatase (266 aa).

7 helical membrane passes run 8–28 (VLAL…AHLI), 39–59 (QGLA…VIYF), 87–107 (WAVG…HDII), 113–133 (SAQV…FADV), 188–208 (SFLL…LGLV), 219–239 (MIVL…HYFL), and 246–266 (TMLP…FLFW).

It belongs to the UppP family.

The protein resides in the cell inner membrane. The enzyme catalyses di-trans,octa-cis-undecaprenyl diphosphate + H2O = di-trans,octa-cis-undecaprenyl phosphate + phosphate + H(+). Catalyzes the dephosphorylation of undecaprenyl diphosphate (UPP). Confers resistance to bacitracin. This is Undecaprenyl-diphosphatase from Thioalkalivibrio sulfidiphilus (strain HL-EbGR7).